The chain runs to 318 residues: Ribose-phosphate pyrophosphokinase 1 (318 aa).

Position 96–101 (96–101 (RQDKKD)) interacts with ATP. The Mg(2+) site is built by Asp128, His130, Asp139, and Asp143. His130 is a binding site for ATP. The binding of phosphoribosylpyrophosphate stretch occupies residues 212–227 (KDRVAILVDDMADTCG).

The protein belongs to the ribose-phosphate pyrophosphokinase family. In terms of assembly, homodimer. The active form is probably a hexamer composed of 3 homodimers. It depends on Mg(2+) as a cofactor.

The enzyme catalyses D-ribose 5-phosphate + ATP = 5-phospho-alpha-D-ribose 1-diphosphate + AMP + H(+). Its pathway is metabolic intermediate biosynthesis; 5-phospho-alpha-D-ribose 1-diphosphate biosynthesis; 5-phospho-alpha-D-ribose 1-diphosphate from D-ribose 5-phosphate (route I): step 1/1. Activated by magnesium and inorganic phosphate. Catalyzes the synthesis of phosphoribosylpyrophosphate (PRPP) that is essential for nucleotide synthesis. The polypeptide is Ribose-phosphate pyrophosphokinase 1 (PRPS1) (Macaca fascicularis (Crab-eating macaque)).